Consider the following 204-residue polypeptide: Ribosome maturation factor RimP (204 aa).

The disordered stretch occupies residues 176–204 (GNFDESQFDEIEESEGEEADEAEQPPTKH). The span at 181 to 198 (SQFDEIEESEGEEADEAE) shows a compositional bias: acidic residues.

Belongs to the RimP family.

Its subcellular location is the cytoplasm. Functionally, required for maturation of 30S ribosomal subunits. This Cereibacter sphaeroides (strain ATCC 17029 / ATH 2.4.9) (Rhodobacter sphaeroides) protein is Ribosome maturation factor RimP.